Consider the following 79-residue polypeptide: Endothelin-2 (79 aa).

The segment at 1–23 (PEQTAPYGLGNPPRRRRRSLPRR) is disordered. Positions 24–39 (CQCSSARDPSCATFCL) are endothelin-like. The segment at 51–79 (SRKSPADVFQTGKTGATRGELLQRLRDIS) is disordered.

Belongs to the endothelin/sarafotoxin family.

Its subcellular location is the secreted. Its function is as follows. Endothelins are endothelium-derived vasoconstrictor peptides. The polypeptide is Endothelin-2 (EDN2) (Macaca fascicularis (Crab-eating macaque)).